A 164-amino-acid polypeptide reads, in one-letter code: UPF0262 protein Nham_0287 (164 aa).

The protein belongs to the UPF0262 family.

In Nitrobacter hamburgensis (strain DSM 10229 / NCIMB 13809 / X14), this protein is UPF0262 protein Nham_0287.